The primary structure comprises 590 residues: Putative ABC transporter ATP-binding protein MM_3016 (590 aa).

2 ABC transporter domains span residues 11 to 251 and 317 to 550; these read VRFE…KLGI and VRIE…AGLI. ATP-binding positions include 45–52 and 350–357; these read GPSGCGKS and GHNGAGKT.

It belongs to the ABC transporter superfamily.

The protein resides in the cell membrane. Functionally, probably part of an ABC transporter complex. Responsible for energy coupling to the transport system. This Methanosarcina mazei (strain ATCC BAA-159 / DSM 3647 / Goe1 / Go1 / JCM 11833 / OCM 88) (Methanosarcina frisia) protein is Putative ABC transporter ATP-binding protein MM_3016.